We begin with the raw amino-acid sequence, 125 residues long: Phosphoribosyl-AMP cyclohydrolase (125 aa).

D74 contacts Mg(2+). C75 is a binding site for Zn(2+). Mg(2+)-binding residues include D76 and D78. Positions 92 and 99 each coordinate Zn(2+).

The protein belongs to the PRA-CH family. As to quaternary structure, homodimer. The cofactor is Mg(2+). Requires Zn(2+) as cofactor.

Its subcellular location is the cytoplasm. It catalyses the reaction 1-(5-phospho-beta-D-ribosyl)-5'-AMP + H2O = 1-(5-phospho-beta-D-ribosyl)-5-[(5-phospho-beta-D-ribosylamino)methylideneamino]imidazole-4-carboxamide. The protein operates within amino-acid biosynthesis; L-histidine biosynthesis; L-histidine from 5-phospho-alpha-D-ribose 1-diphosphate: step 3/9. Functionally, catalyzes the hydrolysis of the adenine ring of phosphoribosyl-AMP. The polypeptide is Phosphoribosyl-AMP cyclohydrolase (Syntrophotalea carbinolica (strain DSM 2380 / NBRC 103641 / GraBd1) (Pelobacter carbinolicus)).